Reading from the N-terminus, the 899-residue chain is 1,4-alpha-glucan-branching enzyme 3, chloroplastic/amyloplastic (899 aa).

The N-terminal 49 residues, 1-49 (MVSLSNQTRFSFHPNNLVVSEKRRLGISGVNFPRKIKLKITCFAAERPR), are a transit peptide targeting the chloroplast. The interval 47-67 (RPRQEKQKKKSQSQSTSDAEA) is disordered. E612 serves as the catalytic Proton donor.

The protein belongs to the glycosyl hydrolase 13 family. GlgB subfamily. As to quaternary structure, monomer. As to expression, mostly expressed in flowers and inflorescence, and, to a lower extent, in seedlings, roots, stems, leaves, siliques and seeds.

Its subcellular location is the plastid. The protein localises to the chloroplast stroma. It is found in the amyloplast. It carries out the reaction Transfers a segment of a (1-&gt;4)-alpha-D-glucan chain to a primary hydroxy group in a similar glucan chain.. The protein operates within glycan biosynthesis; starch biosynthesis. In terms of biological role, catalyzes the formation of the alpha-1,6-glucosidic linkages in starch by scission of a 1,4-alpha-linked oligosaccharide from growing alpha-1,4-glucan chains and the subsequent attachment of the oligosaccharide to the alpha-1,6 position. Essential during embryogenesis. This Arabidopsis thaliana (Mouse-ear cress) protein is 1,4-alpha-glucan-branching enzyme 3, chloroplastic/amyloplastic (SBE3).